The primary structure comprises 693 residues: Cleavage and polyadenylation specificity factor subunit 3-I (693 aa).

An HXHXDH motif motif is present at residues 81 to 86; it reads HFHIDH.

This sequence belongs to the metallo-beta-lactamase superfamily. RNA-metabolizing metallo-beta-lactamase-like family. INTS11 subfamily. As to quaternary structure, component of the CPSF complex, at least composed of CPSF160, CPSF100, CPSF73-I, CPSF73-II, CPSF30, FY and FIPS5. Interacts with CLPS3, CPSF100, CPSF160 and FY. In terms of tissue distribution, highly expressed in carpels. Also detected in seedlings, roots, stems, leaves, flowers and siliques.

It localises to the nucleus. Functionally, component of the cleavage and polyadenylation specificity factor (CPSF) complex that play a key role in pre-mRNA 3'-end formation, recognizing the AAUAAA signal sequence and interacting with poly(A) polymerase and other factors to bring about cleavage and poly(A) addition. May function as mRNA 3'-end-processing endonuclease and also be involved in the histone 3'-end pre-mRNA processing. In Arabidopsis thaliana (Mouse-ear cress), this protein is Cleavage and polyadenylation specificity factor subunit 3-I (CPSF73-I).